Reading from the N-terminus, the 505-residue chain is Glutamate--tRNA ligase (505 aa).

Residues 12 to 22 (PSPTGALHIGG) carry the 'HIGH' region motif. The 'KMSKS' region signature appears at 260–264 (KLSKR). Residue K263 participates in ATP binding.

It belongs to the class-I aminoacyl-tRNA synthetase family. Glutamate--tRNA ligase type 1 subfamily. As to quaternary structure, monomer.

Its subcellular location is the cytoplasm. The catalysed reaction is tRNA(Glu) + L-glutamate + ATP = L-glutamyl-tRNA(Glu) + AMP + diphosphate. Catalyzes the attachment of glutamate to tRNA(Glu) in a two-step reaction: glutamate is first activated by ATP to form Glu-AMP and then transferred to the acceptor end of tRNA(Glu). In Phocaeicola vulgatus (strain ATCC 8482 / DSM 1447 / JCM 5826 / CCUG 4940 / NBRC 14291 / NCTC 11154) (Bacteroides vulgatus), this protein is Glutamate--tRNA ligase.